Reading from the N-terminus, the 408-residue chain is uncharacterized protein (408 aa).

2 disordered regions span residues 218 to 265 (EPTA…TSER) and 367 to 408 (MESE…ETPN). Residues 369-379 (SEVINSSSSTS) show a composition bias toward low complexity. The segment covering 394–408 (IVEEVPETAENETPN) has biased composition (acidic residues).

This sequence to C.elegans C05E11.1.

This is an uncharacterized protein from Arabidopsis thaliana (Mouse-ear cress).